The sequence spans 274 residues: 2,3,4,5-tetrahydropyridine-2,6-dicarboxylate N-succinyltransferase (274 aa).

Positions 106 and 143 each coordinate substrate.

It belongs to the transferase hexapeptide repeat family. As to quaternary structure, homotrimer.

Its subcellular location is the cytoplasm. The catalysed reaction is (S)-2,3,4,5-tetrahydrodipicolinate + succinyl-CoA + H2O = (S)-2-succinylamino-6-oxoheptanedioate + CoA. The protein operates within amino-acid biosynthesis; L-lysine biosynthesis via DAP pathway; LL-2,6-diaminopimelate from (S)-tetrahydrodipicolinate (succinylase route): step 1/3. The protein is 2,3,4,5-tetrahydropyridine-2,6-dicarboxylate N-succinyltransferase of Acidovorax ebreus (strain TPSY) (Diaphorobacter sp. (strain TPSY)).